The following is a 1990-amino-acid chain: Protein TANC2 (1990 aa).

Disordered stretches follow at residues 1–85 (MFRN…SVDE) and 129–149 (SPCSTLTSSTASPPASSPCST). Ser-169, Ser-238, Ser-294, and Ser-400 each carry phosphoserine. The disordered stretch occupies residues 396–442 (IASDSPHASPKHVDANRELPLTQPPSAHSSITSGSCPGTPEMRRRQE). Residues 419-431 (PPSAHSSITSGSC) show a composition bias toward polar residues. 11 ANK repeats span residues 846–878 (EGLSMALASLRNLYTPNIKVSRLLILGGANINY), 884–913 (NNAPILCVQSHLGYTEMVALLLEFGANVDA), 917–946 (SGLTPLGYAAAAGYLSIVVLLCKKRAKVDH), 950–979 (NGQCALVHAALRGHLEVVKFLIQCDWTMAG), 990–1019 (AIQQALIAAASMGYTEIVSYLLDLPEKDEE), 1033–1062 (WGETALTAAAGRGKLEVCRLLLEQGAAVAQ), 1066–1095 (RGAVPLFSTVRQGHWQIVDLLLTHGADVNM), 1099–1128 (QGRTPLMMAASEGHLGTVDFLLAQGASIAL), 1132–1161 (EGLTALSWACLKGHLSVVRSLVDNGAATDH), 1165–1194 (NGRTPLDLAAFYGDAEVVQFLVDHGAMIEH), and 1198–1227 (SGMRPLDRAVGCRNTSVVVTLLKKGAKIGP). 3 TPR repeats span residues 1244-1277 (LSKLMEEGDMFYKKGKVKEAAQRYQYALKKFPRE), 1291-1324 (VSLLLNLSRCRRKMNDFGMAEEFATKALELKPKS), and 1325-1358 (YEAYYARARAKRSSRQFAAALEDLNEAIKLCPNN). Disordered regions lie at residues 1372–1401 (CRQMQQPQQPPPPPQPQQQLPEEAEPEPQH), 1430–1586 (EARP…KMAQ), and 1692–1718 (LTKEDLPQRPSSAYRGGVRYSQTPQIG). A phosphoserine mark is found at Ser-1442 and Ser-1458. Polar residues predominate over residues 1469–1498 (RSSSSVGSPTRQTYQSTSPALSPTHQNSHY). Ser-1530 and Ser-1545 each carry phosphoserine. Over residues 1553-1572 (VYRSQSGSPVRYQQETSVSQ) the composition is skewed to polar residues. Residues Arg-1563 and Arg-1576 each carry the asymmetric dimethylarginine modification. Ser-1579 carries the phosphoserine modification. Ser-1722 is subject to Phosphoserine. Residues 1783 to 1798 (SPSSNSISSTSNLTPT) show a composition bias toward low complexity. Disordered regions lie at residues 1783-1803 (SPSSNSISSTSNLTPTFRPSS) and 1821-1843 (DELSPVSPTQGGYPSEPTRSRTT). A phosphoserine mark is found at Ser-1824 and Ser-1827. Asn-1928 carries an N-linked (GlcNAc...) asparagine glycan. The segment at 1968 to 1990 (SRDSRQGQTSPIKPKRPFVESNV) is disordered.

The protein belongs to the TANC family. In terms of assembly, interacts with KIF1A; the interaction decreases in presence of calcium.

It localises to the cell projection. Its subcellular location is the dendritic spine. Its function is as follows. Scaffolding protein in the dendritic spines which acts as immobile postsynaptic posts able to recruit KIF1A-driven dense core vesicles to dendritic spines. The sequence is that of Protein TANC2 (TANC2) from Homo sapiens (Human).